A 313-amino-acid polypeptide reads, in one-letter code: Glucan 1,3-beta-glucosidase (313 aa).

The signal sequence occupies residues M1–A23. The active-site Proton donor is E124. A glycan (N-linked (GlcNAc...) asparagine) is linked at N202. The active-site Nucleophile is E233. N284 carries N-linked (GlcNAc...) asparagine glycosylation.

This sequence belongs to the glycosyl hydrolase 17 family.

The protein resides in the secreted. Its subcellular location is the cell wall. The catalysed reaction is Successive hydrolysis of beta-D-glucose units from the non-reducing ends of (1-&gt;3)-beta-D-glucans, releasing alpha-glucose.. In terms of biological role, glucanases possibly play a role in cell expansion during growth, in cell-cell fusion during mating, and in spore release during sporulation. This enzyme may be involved in beta-glucan degradation and also function biosynthetically as a transglycosylase. This is Glucan 1,3-beta-glucosidase (BGL2) from Saccharomyces cerevisiae (strain ATCC 204508 / S288c) (Baker's yeast).